The sequence spans 249 residues: Phosphate import ATP-binding protein PstB 2 (249 aa).

The ABC transporter domain maps to 4-244 (FEVTHLNLFY…PKDHRTQGYV (241 aa)). An ATP-binding site is contributed by 36 to 43 (GPSGCGKS).

The protein belongs to the ABC transporter superfamily. Phosphate importer (TC 3.A.1.7) family. In terms of assembly, the complex is composed of two ATP-binding proteins (PstB), two transmembrane proteins (PstC and PstA) and a solute-binding protein (PstS).

The protein resides in the cell inner membrane. It catalyses the reaction phosphate(out) + ATP + H2O = ADP + 2 phosphate(in) + H(+). Part of the ABC transporter complex PstSACB involved in phosphate import. Responsible for energy coupling to the transport system. The protein is Phosphate import ATP-binding protein PstB 2 of Shewanella oneidensis (strain ATCC 700550 / JCM 31522 / CIP 106686 / LMG 19005 / NCIMB 14063 / MR-1).